Reading from the N-terminus, the 282-residue chain is S-formylglutathione hydrolase (282 aa).

K4 carries the post-translational modification N6-succinyllysine. S149 serves as the catalytic Charge relay system. N6-acetyllysine is present on K200. Residues D226 and H260 each act as charge relay system in the active site.

Belongs to the esterase D family. Homodimer.

The protein resides in the cytoplasm. It localises to the cytoplasmic vesicle. The enzyme catalyses S-formylglutathione + H2O = formate + glutathione + H(+). Its function is as follows. Serine hydrolase involved in the detoxification of formaldehyde. This is S-formylglutathione hydrolase (Esd) from Rattus norvegicus (Rat).